Here is a 422-residue protein sequence, read N- to C-terminus: Synaptotagmin-15 (422 aa).

Residues 1–4 are Extracellular-facing; the sequence is MAEQ. The chain crosses the membrane as a helical; Signal-anchor for type III membrane protein span at residues 5-27; sequence LALVIGCIIGGLLLLIGISCCLW. Over 28–422 the chain is Cytoplasmic; that stretch reads KRLCTTFTYE…WHALCRPMEP (395 aa). C2 domains are found at residues 148–267 and 279–400; these read CLGR…VIWR and EFGD…EHWN.

The protein belongs to the synaptotagmin family. In terms of assembly, homodimer.

It localises to the membrane. Its function is as follows. May be involved in the trafficking and exocytosis of secretory vesicles in non-neuronal tissues. This Rattus norvegicus (Rat) protein is Synaptotagmin-15 (Syt15).